We begin with the raw amino-acid sequence, 235 residues long: Purine nucleoside phosphorylase DeoD-type (235 aa).

His4 contacts a purine D-ribonucleoside. Residues Gly20, Arg24, Arg43, and 87 to 90 contribute to the phosphate site; that span reads RVGT. A purine D-ribonucleoside-binding positions include 179 to 181 and 203 to 204; these read EME and SD. Asp204 (proton donor) is an active-site residue.

The protein belongs to the PNP/UDP phosphorylase family. As to quaternary structure, homohexamer; trimer of homodimers.

It carries out the reaction a purine D-ribonucleoside + phosphate = a purine nucleobase + alpha-D-ribose 1-phosphate. The catalysed reaction is a purine 2'-deoxy-D-ribonucleoside + phosphate = a purine nucleobase + 2-deoxy-alpha-D-ribose 1-phosphate. In terms of biological role, catalyzes the reversible phosphorolytic breakdown of the N-glycosidic bond in the beta-(deoxy)ribonucleoside molecules, with the formation of the corresponding free purine bases and pentose-1-phosphate. This is Purine nucleoside phosphorylase DeoD-type from Exiguobacterium sibiricum (strain DSM 17290 / CCUG 55495 / CIP 109462 / JCM 13490 / 255-15).